The sequence spans 131 residues: Small ribosomal subunit protein uS8 (131 aa).

The protein belongs to the universal ribosomal protein uS8 family. Part of the 30S ribosomal subunit. Contacts proteins S5 and S12.

Its function is as follows. One of the primary rRNA binding proteins, it binds directly to 16S rRNA central domain where it helps coordinate assembly of the platform of the 30S subunit. The chain is Small ribosomal subunit protein uS8 from Chlorobium phaeobacteroides (strain DSM 266 / SMG 266 / 2430).